Here is a 187-residue protein sequence, read N- to C-terminus: Translation machinery-associated protein 22 (187 aa).

Residues 94 to 165 (VTIKRIERNK…EIEEFILEKY (72 aa)) enclose the SUI1 domain.

It belongs to the DENR family. As to quaternary structure, interacts with the 40S ribosomal subunit.

It localises to the cytoplasm. This chain is Translation machinery-associated protein 22 (tma-22), found in Neurospora crassa (strain ATCC 24698 / 74-OR23-1A / CBS 708.71 / DSM 1257 / FGSC 987).